The sequence spans 2116 residues: Myosin-2 heavy chain (2116 aa).

The 53-residue stretch at 30–82 folds into the Myosin N-terminal SH3-like domain; the sequence is SDKRYIWYNPDPKERDSYECGEIVSETSDSFTFKTVDGQDRQVKKDDANQRNP. The 674-residue stretch at 86–759 folds into the Myosin motor domain; it reads DGVEDMSELS…QLARIEEARE (674 aa). Lysine 130 is subject to N6,N6-dimethyllysine. ATP is bound at residue 179 to 186; it reads GESGAGKT. Actin-binding stretches follow at residues 638 to 660 and 738 to 752; these read LASL…IPNN and RFGI…GQLA. The IQ domain occupies 762–791; it reads ISEIIKAIQAATRGWIARKVYKQAREHTVA. A coiled-coil region spans residues 817-2116; the sequence is ARPLLKRRNF…MADFFGGFKA (1300 aa). 6 disordered regions span residues 1295–1314, 1363–1399, 1415–1444, 1711–1731, 1771–1791, and 1805–1844; these read VNEQ…KRKV, DKSV…SKKK, TAKK…DAKN, VRDQ…SKRR, LEDE…LESE, and NRSR…AAKL. Composition is skewed to basic and acidic residues over residues 1375–1399, 1415–1443, and 1722–1731; these read KNEE…SKKK, TAKK…DDAK, and RSELEDSKRR. Residues 1805–1832 show a composition bias toward basic and acidic residues; the sequence is NRSRAEKDRKKYEKDLKDTKYKLNDEAA. Phosphothreonine; by MHCK occurs at positions 1823, 1833, and 2029.

This sequence belongs to the TRAFAC class myosin-kinesin ATPase superfamily. Myosin family. As to quaternary structure, myosin-2 heavy chain is two-headed. It self-assembles into filaments. Hexamer of 2 heavy chain subunits (MHC), 2 alkali light chain subunits (MLC) and 2 regulatory light chain subunits (MLC-2). Associates with elmoA. Post-translationally, phosphorylation inhibits thick filament formation and reduces the actin-activated ATPase activity.

Its subcellular location is the cytoplasm. The protein localises to the cell cortex. In terms of biological role, myosin is a protein that binds to actin and has ATPase activity that is activated by actin. The sequence is that of Myosin-2 heavy chain (mhcA) from Dictyostelium discoideum (Social amoeba).